The primary structure comprises 178 residues: Protein GrpE (178 aa).

The span at 1-11 (MSENQNPPPSP) shows a compositional bias: pro residues. Residues 1–23 (MSENQNPPPSPEEIEAAMSANAA) are disordered.

The protein belongs to the GrpE family. In terms of assembly, homodimer.

It localises to the cytoplasm. Its function is as follows. Participates actively in the response to hyperosmotic and heat shock by preventing the aggregation of stress-denatured proteins, in association with DnaK and GrpE. It is the nucleotide exchange factor for DnaK and may function as a thermosensor. Unfolded proteins bind initially to DnaJ; upon interaction with the DnaJ-bound protein, DnaK hydrolyzes its bound ATP, resulting in the formation of a stable complex. GrpE releases ADP from DnaK; ATP binding to DnaK triggers the release of the substrate protein, thus completing the reaction cycle. Several rounds of ATP-dependent interactions between DnaJ, DnaK and GrpE are required for fully efficient folding. In Acidovorax sp. (strain JS42), this protein is Protein GrpE.